Consider the following 171-residue polypeptide: Endoribonuclease YbeY (171 aa).

Residues H115, H119, and H125 each coordinate Zn(2+).

Belongs to the endoribonuclease YbeY family. Zn(2+) serves as cofactor.

The protein resides in the cytoplasm. In terms of biological role, single strand-specific metallo-endoribonuclease involved in late-stage 70S ribosome quality control and in maturation of the 3' terminus of the 16S rRNA. This is Endoribonuclease YbeY from Tropheryma whipplei (strain TW08/27) (Whipple's bacillus).